A 494-amino-acid polypeptide reads, in one-letter code: Cytochrome P450 2A7 (494 aa).

Cysteine 439 lines the heme pocket.

The protein belongs to the cytochrome P450 family. Requires heme as cofactor.

The protein resides in the endoplasmic reticulum membrane. Its subcellular location is the microsome membrane. It carries out the reaction an organic molecule + reduced [NADPH--hemoprotein reductase] + O2 = an alcohol + oxidized [NADPH--hemoprotein reductase] + H2O + H(+). Functionally, cytochromes P450 are a group of heme-thiolate monooxygenases. In liver microsomes, this enzyme is involved in an NADPH-dependent electron transport pathway. It oxidizes a variety of structurally unrelated compounds, including steroids, fatty acids, and xenobiotics. The polypeptide is Cytochrome P450 2A7 (CYP2A7) (Homo sapiens (Human)).